Consider the following 407-residue polypeptide: Argininosuccinate synthase (407 aa).

Residues 13–21 and Ala40 contribute to the ATP site; that span reads AYSGGLDTS. Positions 91 and 96 each coordinate L-citrulline. Position 121 (Gly121) interacts with ATP. Positions 123, 127, and 128 each coordinate L-aspartate. Residue Asn127 coordinates L-citrulline. L-citrulline-binding residues include Arg131, Ser182, Ser191, Glu267, and Tyr279.

It belongs to the argininosuccinate synthase family. Type 1 subfamily. Homotetramer.

Its subcellular location is the cytoplasm. The catalysed reaction is L-citrulline + L-aspartate + ATP = 2-(N(omega)-L-arginino)succinate + AMP + diphosphate + H(+). It functions in the pathway amino-acid biosynthesis; L-arginine biosynthesis; L-arginine from L-ornithine and carbamoyl phosphate: step 2/3. This is Argininosuccinate synthase from Bartonella bacilliformis (strain ATCC 35685 / KC583 / Herrer 020/F12,63).